A 410-amino-acid chain; its full sequence is Putative transporter AmpG 1 (410 aa).

Transmembrane regions (helical) follow at residues 5–25 (LSIIWLFGLISGFNIMITGNT), 40–60 (IGLLSLITLPYSINFLFAPIF), 76–96 (LSWICLTSIALVFFVYILSFL), 98–118 (PFDNLLLFASISLIISFFSSM), 141–161 (GIYIFGYRFGMLLANSGAIYL), 169–189 (EIYKIFAILIFIYLILLIVGV), 217–237 (ILKPIGSISFIILILIFLILY), 265–285 (VGKFWGVMGAIVGGLLGGFIM), 290–310 (ILDSILLFGIIHALAHILFII), 320–340 (LLFITIGAESITGGMTMTAYI), 356–378 (YSFFSSMMGISRSIFPIISGYIV), and 383–402 (WQNFFLFTTIITIPSLLVLL).

Belongs to the major facilitator superfamily.

Its subcellular location is the cell inner membrane. The protein is Putative transporter AmpG 1 (ampG1) of Rickettsia bellii (strain RML369-C).